Here is a 314-residue protein sequence, read N- to C-terminus: Homoserine kinase (314 aa).

96-106 lines the ATP pocket; it reads PIGSGLGSSAC.

The protein belongs to the GHMP kinase family. Homoserine kinase subfamily.

It localises to the cytoplasm. The catalysed reaction is L-homoserine + ATP = O-phospho-L-homoserine + ADP + H(+). Its pathway is amino-acid biosynthesis; L-threonine biosynthesis; L-threonine from L-aspartate: step 4/5. Functionally, catalyzes the ATP-dependent phosphorylation of L-homoserine to L-homoserine phosphate. The polypeptide is Homoserine kinase (Histophilus somni (strain 129Pt) (Haemophilus somnus)).